The sequence spans 189 residues: Apolipophorin-3 (189 aa).

The signal sequence occupies residues 1 to 18; sequence MAAKFVVVLAACVALSHS. A propeptide spanning residues 19–23 is cleaved from the precursor; sequence AMVRR.

Belongs to the insect apolipophorin-3 family. As to quaternary structure, equilibrium between a soluble monomer and a bound lipoprotein form. Apolipophorin-3 associates with lipophorin during lipid loading until each particle contains 9 or 14 molecules of apolipophorin-3. Hemolymph.

It localises to the secreted. Assists in the loading of diacylglycerol, generated from triacylglycerol stores in the fat body through the action of adipokinetic hormone, into lipophorin, the hemolymph lipoprotein. It increases the lipid carrying capacity of lipophorin by covering the expanding hydrophobic surface resulting from diacylglycerol uptake. It thus plays a critical role in the transport of lipids during flight in several species of insects. This chain is Apolipophorin-3, found in Manduca sexta (Tobacco hawkmoth).